The following is a 183-amino-acid chain: MGLEIVVKDIQEGARAEVSRIKAEGDAKASEIINEAKEIQKKTLGDSLAKAEEDLQSLHQQVISSANLEVKRITLNKRKELLDTVYNQTVENIKSMPASKKEELLKSILDKHEASGARAYSSKESEELVKKLTSLSYAGNIDSIGGIVLENEDRTVRLDFTYDSILKSVYERSLKQISDILYG.

This sequence belongs to the V-ATPase E subunit family. Has multiple subunits, A(3), B(3), C, D, E, F, G, I and K(x); there may be a few other subunits as well.

The protein resides in the cell membrane. Component of the A-type ATP synthase that produces ATP from ADP in the presence of a proton gradient across the membrane. The chain is A-type ATP synthase subunit E from Methanosarcina mazei (strain ATCC BAA-159 / DSM 3647 / Goe1 / Go1 / JCM 11833 / OCM 88) (Methanosarcina frisia).